Here is a 386-residue protein sequence, read N- to C-terminus: Copper-containing nitrite reductase (386 aa).

The signal sequence occupies residues Met1 to Ala18. Cys19 carries the N-palmitoyl cysteine lipid modification. The S-diacylglycerol cysteine moiety is linked to residue Cys19. 2 consecutive Plastocyanin-like domains span residues Trp97–Glu191 and Gly241–Glu342. 6 residues coordinate Cu cation: His130, His135, His170, Cys171, His179, and Met184. Residue His135 coordinates substrate. His276 contacts substrate. His325 lines the Cu cation pocket. Positions Gly363–Tyr386 are disordered. The segment covering Ala364–Tyr386 has biased composition (low complexity). Repeat copies occupy residues Ala367–Pro371, Ala372–Pro376, and Ala377–Pro381. The segment at Ala367–Pro381 is 3 X 5 AA tandem repeats of A-A-S-A-P.

It belongs to the multicopper oxidase family. Homotrimer. The cofactor is Cu(+). Requires Cu(2+) as cofactor.

Its subcellular location is the cell outer membrane. It catalyses the reaction nitric oxide + Fe(III)-[cytochrome c] + H2O = Fe(II)-[cytochrome c] + nitrite + 2 H(+). In terms of biological role, catalyzes the reduction of nitrite to nitric oxide (NO). It could be essential for growth and survival in oxygen-depleted environments. The polypeptide is Copper-containing nitrite reductase (aniA) (Neisseria meningitidis serogroup A / serotype 4A (strain DSM 15465 / Z2491)).